Here is a 112-residue protein sequence, read N- to C-terminus: T cell receptor alpha variable 9-2 (112 aa).

An N-terminal signal peptide occupies residues 1–20 (MNYSPGLVSLILLLLGRTRG). The 92-residue stretch at 21-112 (DSVTQMEGPV…DSAVYFCALS (92 aa)) folds into the Ig-like domain. An N-linked (GlcNAc...) asparagine glycan is attached at Asn41. Cys42 and Cys109 are disulfide-bonded.

As to quaternary structure, alpha-beta TR is a heterodimer composed of an alpha and beta chain; disulfide-linked. The alpha-beta TR is associated with the transmembrane signaling CD3 coreceptor proteins to form the TR-CD3 (TcR or TCR). The assembly of alpha-beta TR heterodimers with CD3 occurs in the endoplasmic reticulum where a single alpha-beta TR heterodimer associates with one CD3D-CD3E heterodimer, one CD3G-CD3E heterodimer and one CD247 homodimer forming a stable octameric structure. CD3D-CD3E and CD3G-CD3E heterodimers preferentially associate with TR alpha and TR beta chains, respectively. The association of the CD247 homodimer is the last step of TcR assembly in the endoplasmic reticulum and is required for transport to the cell surface.

The protein resides in the cell membrane. V region of the variable domain of T cell receptor (TR) alpha chain that participates in the antigen recognition. Alpha-beta T cell receptors are antigen specific receptors which are essential to the immune response and are present on the cell surface of T lymphocytes. Recognize peptide-major histocompatibility (MH) (pMH) complexes that are displayed by antigen presenting cells (APC), a prerequisite for efficient T cell adaptive immunity against pathogens. Binding of alpha-beta TR to pMH complex initiates TR-CD3 clustering on the cell surface and intracellular activation of LCK that phosphorylates the ITAM motifs of CD3G, CD3D, CD3E and CD247 enabling the recruitment of ZAP70. In turn ZAP70 phosphorylates LAT, which recruits numerous signaling molecules to form the LAT signalosome. The LAT signalosome propagates signal branching to three major signaling pathways, the calcium, the mitogen-activated protein kinase (MAPK) kinase and the nuclear factor NF-kappa-B (NF-kB) pathways, leading to the mobilization of transcription factors that are critical for gene expression and essential for T cell growth and differentiation. The T cell repertoire is generated in the thymus, by V-(D)-J rearrangement. This repertoire is then shaped by intrathymic selection events to generate a peripheral T cell pool of self-MH restricted, non-autoaggressive T cells. Post-thymic interaction of alpha-beta TR with the pMH complexes shapes TR structural and functional avidity. The protein is T cell receptor alpha variable 9-2 of Homo sapiens (Human).